Consider the following 700-residue polypeptide: Neoverrucotoxin subunit beta (700 aa).

Residues 506–700 (HMPGVETIKD…QKVNGQIKLL (195 aa)) form the B30.2/SPRY domain.

Belongs to the SNTX/VTX toxin family. Heterodimer of alpha and beta subunits. Post-translationally, not glycosylated. Four intrachain disulfide linkages are present in the heterodimer. No interchain disulfide bound links the two subunits. Expressed by the venom gland.

It localises to the secreted. Its function is as follows. Has hemolytic and lethal activities. Its hemolytic activity is inhibited by anionic lipids, especially potently by cardiolipin. This is Neoverrucotoxin subunit beta from Synanceia verrucosa (Reef stonefish).